Consider the following 161-residue polypeptide: SsrA-binding protein (161 aa).

Positions 138–161 are disordered; it reads DKRTDSKEKDWNRDKARIMKSSLR. The segment covering 139-154 has biased composition (basic and acidic residues); that stretch reads KRTDSKEKDWNRDKAR.

Belongs to the SmpB family.

Its subcellular location is the cytoplasm. Its function is as follows. Required for rescue of stalled ribosomes mediated by trans-translation. Binds to transfer-messenger RNA (tmRNA), required for stable association of tmRNA with ribosomes. tmRNA and SmpB together mimic tRNA shape, replacing the anticodon stem-loop with SmpB. tmRNA is encoded by the ssrA gene; the 2 termini fold to resemble tRNA(Ala) and it encodes a 'tag peptide', a short internal open reading frame. During trans-translation Ala-aminoacylated tmRNA acts like a tRNA, entering the A-site of stalled ribosomes, displacing the stalled mRNA. The ribosome then switches to translate the ORF on the tmRNA; the nascent peptide is terminated with the 'tag peptide' encoded by the tmRNA and targeted for degradation. The ribosome is freed to recommence translation, which seems to be the essential function of trans-translation. This is SsrA-binding protein from Aliivibrio fischeri (strain ATCC 700601 / ES114) (Vibrio fischeri).